We begin with the raw amino-acid sequence, 390 residues long: Phosphoglycerate kinase (390 aa).

Residues 21–23 (DLN), arginine 36, 59–62 (HLGR), arginine 114, and arginine 147 each bind substrate. ATP-binding positions include lysine 198, glutamate 314, and 340–343 (GGDT).

It belongs to the phosphoglycerate kinase family. In terms of assembly, monomer.

The protein localises to the cytoplasm. It carries out the reaction (2R)-3-phosphoglycerate + ATP = (2R)-3-phospho-glyceroyl phosphate + ADP. The protein operates within carbohydrate degradation; glycolysis; pyruvate from D-glyceraldehyde 3-phosphate: step 2/5. This is Phosphoglycerate kinase from Buchnera aphidicola subsp. Acyrthosiphon pisum (strain 5A).